Reading from the N-terminus, the 296-residue chain is Putative ankyrin repeat protein FPV216 (296 aa).

ANK repeat units lie at residues serine 73–threonine 102 and leucine 107–isoleucine 136.

This chain is Putative ankyrin repeat protein FPV216, found in Fowlpox virus (strain NVSL) (FPV).